Reading from the N-terminus, the 284-residue chain is Tetraspanin-10 (284 aa).

The Cytoplasmic segment spans residues 1–11 (MGMGTSTFVIR). The chain crosses the membrane as a helical span at residues 12-32 (WVNLLTMLLAVAVIIFGVWMS). Topologically, residues 33 to 43 (THNDGCRRSLT) are extracellular. Residues 44–64 (FPVIALGGFIFLISIIGFLGA) form a helical membrane-spanning segment. The Cytoplasmic portion of the chain corresponds to 65-75 (CKRSVALLWIY). Residues 76-96 (LAVLLIVLIAILVFTVLAFIV) form a helical membrane-spanning segment. Over 97-228 (TNNGSGHTNP…AGVAQYMKTE (132 aa)) the chain is Extracellular. 3 N-linked (GlcNAc...) asparagine glycosylation sites follow: N99, N128, and N183. Residues 229 to 249 (WRLVAIFNVVLFVVLISSLLS) form a helical membrane-spanning segment. Topologically, residues 250–284 (TRFDSEQSFGLLNGLVQISNITFKDCQTTTVPKQF) are cytoplasmic.

This sequence belongs to the tetraspanin (TM4SF) family.

The protein resides in the membrane. In terms of biological role, may be involved in the regulation of cell differentiation. The protein is Tetraspanin-10 (TET10) of Arabidopsis thaliana (Mouse-ear cress).